We begin with the raw amino-acid sequence, 278 residues long: HTH-type transcriptional activator RhaS (278 aa).

Positions 174–272 (NQLMAWLEEH…NWSPRDIRQG (99 aa)) constitute an HTH araC/xylS-type domain. 2 DNA-binding regions (H-T-H motif) span residues 191-212 (EAVA…KQHT) and 239-262 (VTEI…RREF).

As to quaternary structure, binds DNA as a dimer.

The protein localises to the cytoplasm. Its function is as follows. Activates expression of the rhaBAD and rhaT operons. In Salmonella schwarzengrund (strain CVM19633), this protein is HTH-type transcriptional activator RhaS.